A 417-amino-acid polypeptide reads, in one-letter code: Nuclear envelope integral membrane protein 2 (417 aa).

A signal peptide spans 1–24; the sequence is MGPRQGRWWLLLWLPPLATLPVRG. The next 5 helical transmembrane spans lie at 148 to 168, 177 to 197, 207 to 227, 239 to 259, and 280 to 300; these read NIMDFKLFLVFVAGVFLFFYA, FYYSSGTVLGVLMTLVFVLLL, TFWALMVGCWFASVYIVCQLM, IYVLGYVLIVGFFSFVVCYKH, and LVLVYAGVAVPQFAYAAIILL.

This sequence belongs to the NEMP family.

It is found in the nucleus inner membrane. The chain is Nuclear envelope integral membrane protein 2 (NEMP2) from Homo sapiens (Human).